Consider the following 364-residue polypeptide: Phosphoserine aminotransferase (364 aa).

An L-glutamate-binding site is contributed by R40. Pyridoxal 5'-phosphate is bound by residues 74-75 (GT), W100, T149, D170, and Q193. An N6-(pyridoxal phosphate)lysine modification is found at K194. Pyridoxal 5'-phosphate is bound at residue 235 to 236 (NT).

This sequence belongs to the class-V pyridoxal-phosphate-dependent aminotransferase family. SerC subfamily. Homodimer. Pyridoxal 5'-phosphate serves as cofactor. In terms of tissue distribution, expressed in ovary and head.

It catalyses the reaction O-phospho-L-serine + 2-oxoglutarate = 3-phosphooxypyruvate + L-glutamate. It carries out the reaction 4-(phosphooxy)-L-threonine + 2-oxoglutarate = (R)-3-hydroxy-2-oxo-4-phosphooxybutanoate + L-glutamate. The protein operates within amino-acid biosynthesis; L-serine biosynthesis; L-serine from 3-phospho-D-glycerate: step 2/3. It functions in the pathway cofactor biosynthesis; pyridoxine 5'-phosphate biosynthesis; pyridoxine 5'-phosphate from D-erythrose 4-phosphate: step 3/5. Functionally, catalyzes the reversible conversion of 3-phosphohydroxypyruvate to phosphoserine and of 3-hydroxy-2-oxo-4-phosphonooxybutanoate to phosphohydroxythreonine. The polypeptide is Phosphoserine aminotransferase (Drosophila melanogaster (Fruit fly)).